We begin with the raw amino-acid sequence, 427 residues long: Adenylosuccinate synthetase (427 aa).

GTP is bound by residues 12–18 (GDEGKGK) and 40–42 (GHT). Aspartate 13 serves as the catalytic Proton acceptor. Residues aspartate 13 and glycine 40 each coordinate Mg(2+). IMP contacts are provided by residues 13 to 16 (DEGK), 38 to 41 (NAGH), threonine 126, arginine 140, glutamine 221, threonine 236, and arginine 299. Catalysis depends on histidine 41, which acts as the Proton donor. 295-301 (STTKRPR) is a substrate binding site. GTP-binding positions include arginine 301, 327–329 (KLD), and 409–411 (SVG).

Belongs to the adenylosuccinate synthetase family. As to quaternary structure, homodimer. The cofactor is Mg(2+).

It localises to the cytoplasm. It catalyses the reaction IMP + L-aspartate + GTP = N(6)-(1,2-dicarboxyethyl)-AMP + GDP + phosphate + 2 H(+). Its pathway is purine metabolism; AMP biosynthesis via de novo pathway; AMP from IMP: step 1/2. Functionally, plays an important role in the de novo pathway of purine nucleotide biosynthesis. Catalyzes the first committed step in the biosynthesis of AMP from IMP. The protein is Adenylosuccinate synthetase of Borrelia duttonii (strain Ly).